We begin with the raw amino-acid sequence, 242 residues long: Agamous-like MADS-box protein AGL8 (242 aa).

One can recognise an MADS-box domain in the interval 3–57 (RGRVQLKRIENKINRQVTFSKRRSGLLKKAHEISVLCDAEVALIVFSSKGKLFEY). A K-box domain is found at 88–178 (SENWVLEHAK…LKKIKEREKK (91 aa)). A coiled-coil region spans residues 89-178 (ENWVLEHAKL…LKKIKEREKK (90 aa)).

Homodimer capable of binding to CArG-box sequences. As to expression, vascular tissue of cauline leaves, floral shoot apex and valves of carpels and fruits.

The protein localises to the nucleus. Probable transcription factor that promotes early floral meristem identity in synergy with APETALA1 and CAULIFLOWER. Is required subsequently for the transition of an inflorescence meristem into a floral meristem. Seems to be partially redundant to the function of APETALA1 and CAULIFLOWER in the up-regulation of LEAFY. Is also required for normal pattern of cell division, expansion and differentiation during morphogenesis of the silique. Probably not required for fruit elongation but instead is required to prevent ectopic activity of IND. Represses SAUR10 expression in stems and inflorescence branches. This Arabidopsis thaliana (Mouse-ear cress) protein is Agamous-like MADS-box protein AGL8 (AGL8).